We begin with the raw amino-acid sequence, 85 residues long: Toxin BmKT (85 aa).

Positions 1-19 (MNYLVFFSLALLLMTGVES) are cleaved as a signal peptide. Positions 21 to 83 (RDGYIADDKN…VPIRVPGKCN (63 aa)) constitute an LCN-type CS-alpha/beta domain. Disulfide bonds link cysteine 31–cysteine 82, cysteine 35–cysteine 55, cysteine 41–cysteine 65, and cysteine 45–cysteine 67.

It belongs to the long (4 C-C) scorpion toxin superfamily. Sodium channel inhibitor family. Alpha subfamily. In terms of tissue distribution, expressed by the venom gland.

The protein localises to the secreted. Functionally, binds to sodium channels (Nav) and inhibits the inactivation of the activated channels, thereby blocking neuronal transmission. Tested on mice, has antitumor effect and strong inhibitory effect on pain. This Olivierus martensii (Manchurian scorpion) protein is Toxin BmKT.